Here is a 279-residue protein sequence, read N- to C-terminus: RRP15-like protein (279 aa).

3 disordered regions span residues 1-40 (MALL…GANA), 56-120 (GPTV…TERR), and 200-279 (KSTA…DEED). Over residues 73 to 83 (KTSEAAKKPGF) the composition is skewed to basic and acidic residues. 2 stretches are compositionally biased toward acidic residues: residues 93 to 104 (KEEDDDDEEDGD) and 213 to 224 (QETDDDDEDDTA). Over residues 232–245 (KKSEWNVLREDFMT) the composition is skewed to basic and acidic residues. Over residues 267–279 (DEADDSDDDDEED) the composition is skewed to acidic residues.

This sequence belongs to the RRP15 family.

The polypeptide is RRP15-like protein (Drosophila pseudoobscura pseudoobscura (Fruit fly)).